Reading from the N-terminus, the 375-residue chain is MSCPVIELTQQLIRRPSLSPDDAGCQALMIERLRKIGFTIEHMDFGDTQNFWAWRGRGETLAFAGHTDVVPAGDVDRWINPPFEPTIRDGMLFGRGAADMKGSLAAMVVAAERFVAQHPHHRGRLAFLITSDEEASAKNGTVKVVEALMARNERLDYCLVGEPSSTEIVGDVVKNGRRGSLTCNLTIHGVQGHVAYPHLADNPVHRAAPFLNELVAIEWDRGNDFFPATSMQVANIQAGTGSNNVIPGELFVQFNFRFSTELTDEMIKERVHALLEKHQLRYTVDWWLSGQPFLTARGKLVDAVVNAIEHYNEIKPQLLTTGGTSDGRFIARMGAQVVELGPVNATIHKINECVNAADLQLLARMYQRIMEQLVA.

His66 is a binding site for Zn(2+). The active site involves Asp68. Asp99 provides a ligand contact to Zn(2+). Residue Glu133 is the Proton acceptor of the active site. Positions 134, 162, and 348 each coordinate Zn(2+).

This sequence belongs to the peptidase M20A family. DapE subfamily. Homodimer. It depends on Zn(2+) as a cofactor. The cofactor is Co(2+).

It catalyses the reaction N-succinyl-(2S,6S)-2,6-diaminopimelate + H2O = (2S,6S)-2,6-diaminopimelate + succinate. It functions in the pathway amino-acid biosynthesis; L-lysine biosynthesis via DAP pathway; LL-2,6-diaminopimelate from (S)-tetrahydrodipicolinate (succinylase route): step 3/3. In terms of biological role, catalyzes the hydrolysis of N-succinyl-L,L-diaminopimelic acid (SDAP), forming succinate and LL-2,6-diaminopimelate (DAP), an intermediate involved in the bacterial biosynthesis of lysine and meso-diaminopimelic acid, an essential component of bacterial cell walls. In Salmonella dublin (strain CT_02021853), this protein is Succinyl-diaminopimelate desuccinylase.